We begin with the raw amino-acid sequence, 418 residues long: Tyrosine--tRNA ligase (418 aa).

Tyr-34 contacts L-tyrosine. Residues 39–48 (PTADSLHLGH) carry the 'HIGH' region motif. Residues Tyr-169 and Gln-173 each coordinate L-tyrosine. The 'KMSKS' region motif lies at 229–233 (KFGKS). Lys-232 is an ATP binding site. In terms of domain architecture, S4 RNA-binding spans 352–418 (LNIVDLLVTA…GKKKYFVLTY (67 aa)).

This sequence belongs to the class-I aminoacyl-tRNA synthetase family. TyrS type 1 subfamily. As to quaternary structure, homodimer.

The protein localises to the cytoplasm. It carries out the reaction tRNA(Tyr) + L-tyrosine + ATP = L-tyrosyl-tRNA(Tyr) + AMP + diphosphate + H(+). Catalyzes the attachment of tyrosine to tRNA(Tyr) in a two-step reaction: tyrosine is first activated by ATP to form Tyr-AMP and then transferred to the acceptor end of tRNA(Tyr). This chain is Tyrosine--tRNA ligase, found in Streptococcus gordonii (strain Challis / ATCC 35105 / BCRC 15272 / CH1 / DL1 / V288).